Here is a 456-residue protein sequence, read N- to C-terminus: Glutamate-gated chloride channel (456 aa).

An N-terminal signal peptide occupies residues 1 to 22; it reads MGSGHYFWAILYFASLCSASLA. At 23-245 the chain is on the extracellular side; that stretch reads NNAKINFREK…VDLLFKREFS (223 aa). Residues R71, R90, and S154 each contribute to the L-glutamate site. A disulfide bridge connects residues C163 and C177. L-glutamate is bound at residue S183. The cysteines at positions 222 and 233 are disulfide-linked. Residues 246-268 traverse the membrane as a helical segment; that stretch reads YYLIQIYIPCCMLVIVSWVSFWL. At 269–273 the chain is on the cytoplasmic side; sequence DQGAV. A helical membrane pass occupies residues 274-295; the sequence is PARVSLGVTTLLTMATQTSGIN. Over 296–302 the chain is Extracellular; it reads ASLPPVS. The helical transmembrane segment at 303-323 threads the bilayer; sequence YTKAIDVWTGVCLTFVFGALL. The Cytoplasmic portion of the chain corresponds to 324-426; it reads EFALVNYASR…RQCSRSKRID (103 aa). A helical membrane pass occupies residues 427–450; the sequence is VISRITFPLVFALFNLVYWSTYLF. Residues 451–456 are Extracellular-facing; it reads REEEDE.

The protein belongs to the ligand-gated ion channel (TC 1.A.9) family. Glutamate-gated chloride channel (TC 1.A.9.4) subfamily. Pentamer. Homomultimer. In terms of tissue distribution, expressed in the medulla layers (at protein level). Expressed in all major ON pathway medulla neurons (Mi1, Tm3, Mi4, and Mi9) and in OFF pathway neurons (Tm1, Tm2, Tm4, and Tm9).

The protein resides in the postsynaptic cell membrane. It is found in the cell membrane. With respect to regulation, glutamate binding triggers a rapidly reversible current, while the anti-helmintic drug ivermectin triggers a permanently open channel configuration. Inhibited by picrotoxin. Glutamate-gated chloride channel subunit. Together with Gamma-aminobutyric acid receptor Rdl, plays an important role in the visual response by regulating the activity of ON/OFF-selective neurons. The chain is Glutamate-gated chloride channel (GluClalpha) from Drosophila melanogaster (Fruit fly).